A 105-amino-acid chain; its full sequence is UPF0060 membrane protein Ajs_1326 (105 aa).

A run of 4 helical transmembrane segments spans residues 4 to 24, 30 to 50, 60 to 80, and 82 to 102; these read FALF…PYLW, SAWL…LLTL, AAYG…VDGI, and PTAW…LIMF.

Belongs to the UPF0060 family.

The protein localises to the cell inner membrane. The polypeptide is UPF0060 membrane protein Ajs_1326 (Acidovorax sp. (strain JS42)).